Here is a 584-residue protein sequence, read N- to C-terminus: Pectinesterase 1 (584 aa).

Residues 1-42 (MTHIKEFFTKLSESSSNQNISNIPKKKKKLFLALFATLLVVA) form the signal peptide. N-linked (GlcNAc...) asparagine glycosylation is found at Asn108, Asn129, and Asn226. Thr348 and Gln378 together coordinate substrate. Catalysis depends on Asp401, which acts as the Proton donor. A disulfide bridge connects residues Cys415 and Cys435. Asp422 (nucleophile) is an active-site residue. The substrate site is built by Arg490 and Trp492.

In the N-terminal section; belongs to the PMEI family. This sequence in the C-terminal section; belongs to the pectinesterase family. Expressed at high levels in flower buds, shoots and young leaves, and at lower levels in young fruit, young bark and juice vesicles. Not expressed at significant levels in leaf abscission zones following ethylene treatment or in mature leaves. In fruit abscission zones, expression was initially undetectable but increased markedly following ethylene treatment.

The protein resides in the secreted. The protein localises to the cell wall. The enzyme catalyses [(1-&gt;4)-alpha-D-galacturonosyl methyl ester](n) + n H2O = [(1-&gt;4)-alpha-D-galacturonosyl](n) + n methanol + n H(+). Its pathway is glycan metabolism; pectin degradation; 2-dehydro-3-deoxy-D-gluconate from pectin: step 1/5. Acts in the modification of cell walls via demethylesterification of cell wall pectin. The polypeptide is Pectinesterase 1 (PECS-1.1) (Citrus sinensis (Sweet orange)).